Here is a 194-residue protein sequence, read N- to C-terminus: dCTP deaminase, dUMP-forming (194 aa).

Residues 104 to 109, Asp122, 130 to 132, Gln151, Tyr165, Lys172, and Gln176 each bind dCTP; these read RSSLGR and TLE. Glu132 serves as the catalytic Proton donor/acceptor.

It belongs to the dCTP deaminase family. As to quaternary structure, homotrimer.

The catalysed reaction is dCTP + 2 H2O = dUMP + NH4(+) + diphosphate. It participates in pyrimidine metabolism; dUMP biosynthesis; dUMP from dCTP: step 1/1. Bifunctional enzyme that catalyzes both the deamination of dCTP to dUTP and the hydrolysis of dUTP to dUMP without releasing the toxic dUTP intermediate. The chain is dCTP deaminase, dUMP-forming from Dictyoglomus thermophilum (strain ATCC 35947 / DSM 3960 / H-6-12).